The primary structure comprises 250 residues: 2,3-bisphosphoglycerate-dependent phosphoglycerate mutase (250 aa).

Residues Arg10 to Asn17, Thr23 to Gly24, Arg62, Glu89 to Tyr92, Lys100, Arg116 to Arg117, and Gly185 to Asn186 each bind substrate. His11 (tele-phosphohistidine intermediate) is an active-site residue. Glu89 serves as the catalytic Proton donor/acceptor.

The protein belongs to the phosphoglycerate mutase family. BPG-dependent PGAM subfamily. In terms of assembly, homodimer.

It carries out the reaction (2R)-2-phosphoglycerate = (2R)-3-phosphoglycerate. It functions in the pathway carbohydrate degradation; glycolysis; pyruvate from D-glyceraldehyde 3-phosphate: step 3/5. Its function is as follows. Catalyzes the interconversion of 2-phosphoglycerate and 3-phosphoglycerate. The protein is 2,3-bisphosphoglycerate-dependent phosphoglycerate mutase of Serratia proteamaculans (strain 568).